Here is a 201-residue protein sequence, read N- to C-terminus: MNKSRIDKQNEVYNFIKLQIKEKGYPPSVREICKAVGLSSTSSVHFHLKRLEKEGLIKRDSSKTRAIEIVDPTSKKEVINVPIVGTITAGNPILAIENIEDVFPLPIDYVKNTKDLFMLKVSGESMIEAGILNGDLAIIEKTDSANNGDIVVALIDNEATLKRFFKESSYIRLQPENKSMKPIILENCKVLGRLVGIYRKY.

Positions 29 to 49 form a DNA-binding region, H-T-H motif; sequence VREICKAVGLSSTSSVHFHLK. Catalysis depends on for autocatalytic cleavage activity residues Ser125 and Lys162.

This sequence belongs to the peptidase S24 family. Homodimer.

The catalysed reaction is Hydrolysis of Ala-|-Gly bond in repressor LexA.. Represses a number of genes involved in the response to DNA damage (SOS response), including recA and lexA. In the presence of single-stranded DNA, RecA interacts with LexA causing an autocatalytic cleavage which disrupts the DNA-binding part of LexA, leading to derepression of the SOS regulon and eventually DNA repair. This Clostridium botulinum (strain ATCC 19397 / Type A) protein is LexA repressor.